A 263-amino-acid chain; its full sequence is Glucosamine-6-phosphate deaminase (263 aa).

D67 functions as the Proton acceptor; for enolization step in the catalytic mechanism. N136 acts as the For ring-opening step in catalysis. H138 acts as the Proton acceptor; for ring-opening step in catalysis. The For ring-opening step role is filled by E143.

This sequence belongs to the glucosamine/galactosamine-6-phosphate isomerase family. NagB subfamily. In terms of assembly, homohexamer.

It carries out the reaction alpha-D-glucosamine 6-phosphate + H2O = beta-D-fructose 6-phosphate + NH4(+). Its pathway is amino-sugar metabolism; N-acetylneuraminate degradation; D-fructose 6-phosphate from N-acetylneuraminate: step 5/5. Functionally, catalyzes the reversible isomerization-deamination of glucosamine 6-phosphate (GlcN6P) to form fructose 6-phosphate (Fru6P) and ammonium ion. The polypeptide is Glucosamine-6-phosphate deaminase (Cellvibrio japonicus (strain Ueda107) (Pseudomonas fluorescens subsp. cellulosa)).